The sequence spans 353 residues: MIEIDGSFGEGGGQILRTSVALSAVTLKPVRIFNIRAKRKNPGLRRQHMVAVKALAEMTDAEVRGLELGSTEIVFIPKTLKAGTFRFDIGTAGSVSLVLQAVTPAALFAPGEVRVQLRGGTDVPMSPPVDYLRFVFYPLLERFGAKTELVLKRRGHYPKGGGEVEFASRPVDSLTQWGEVERGEVLKVRGLSHCVKLPKHVAERQAKAAEEVLKKSGLKNVDIDLEWYPPERDPHLGPGSGIVLWAITERSLLGADSLGARGKRAERVGEEAARKLLEDLSTGKALDRHMSDMIVPYVSLACGRTEVGGAALTMHAWTHVHVVKKFLPELEVEISGELNKPFVMRVKGVCWQR.

Residues Gln-100 and 289–292 each bind ATP; that span reads HMSD. Catalysis depends on His-315, which acts as the Tele-AMP-histidine intermediate.

It belongs to the RNA 3'-terminal cyclase family. Type 1 subfamily.

The protein resides in the cytoplasm. The catalysed reaction is a 3'-end 3'-phospho-ribonucleotide-RNA + ATP = a 3'-end 2',3'-cyclophospho-ribonucleotide-RNA + AMP + diphosphate. Functionally, catalyzes the conversion of 3'-phosphate to a 2',3'-cyclic phosphodiester at the end of RNA. The mechanism of action of the enzyme occurs in 3 steps: (A) adenylation of the enzyme by ATP; (B) transfer of adenylate to an RNA-N3'P to produce RNA-N3'PP5'A; (C) and attack of the adjacent 2'-hydroxyl on the 3'-phosphorus in the diester linkage to produce the cyclic end product. The biological role of this enzyme is unknown but it is likely to function in some aspects of cellular RNA processing. In Ignicoccus hospitalis (strain KIN4/I / DSM 18386 / JCM 14125), this protein is RNA 3'-terminal phosphate cyclase.